The primary structure comprises 157 residues: 6,7-dimethyl-8-ribityllumazine synthase (157 aa).

5-amino-6-(D-ribitylamino)uracil contacts are provided by residues Phe22, 57–59 (AYE), and 81–83 (TVI). 86–87 (GT) contacts (2S)-2-hydroxy-3-oxobutyl phosphate. His89 serves as the catalytic Proton donor. Position 114 (Phe114) interacts with 5-amino-6-(D-ribitylamino)uracil. Arg128 contributes to the (2S)-2-hydroxy-3-oxobutyl phosphate binding site.

The protein belongs to the DMRL synthase family. In terms of assembly, forms an icosahedral capsid composed of 60 subunits, arranged as a dodecamer of pentamers.

The enzyme catalyses (2S)-2-hydroxy-3-oxobutyl phosphate + 5-amino-6-(D-ribitylamino)uracil = 6,7-dimethyl-8-(1-D-ribityl)lumazine + phosphate + 2 H2O + H(+). The protein operates within cofactor biosynthesis; riboflavin biosynthesis; riboflavin from 2-hydroxy-3-oxobutyl phosphate and 5-amino-6-(D-ribitylamino)uracil: step 1/2. Catalyzes the formation of 6,7-dimethyl-8-ribityllumazine by condensation of 5-amino-6-(D-ribitylamino)uracil with 3,4-dihydroxy-2-butanone 4-phosphate. This is the penultimate step in the biosynthesis of riboflavin. This is 6,7-dimethyl-8-ribityllumazine synthase from Haemophilus influenzae (strain 86-028NP).